Consider the following 1845-residue polypeptide: Vacuolar membrane-associated protein iml1 (1845 aa).

Positions 1–12 (MSLRGPMKRSHL) are enriched in basic residues. 4 disordered regions span residues 1-48 (MSLR…HGQD), 547-566 (PHLS…TAHK), 732-822 (KRRH…GKAP), and 854-982 (SALP…SPQN). Positions 24 to 33 (ATSSQAQAQS) are enriched in polar residues. Over residues 34–47 (HPRDGGPYNDEHGQ) the composition is skewed to basic and acidic residues. Residues 732–743 (KRRHQRKPSKPK) show a composition bias toward basic residues. Residues 755–772 (AHERLSARSVLRLREHET) are compositionally biased toward basic and acidic residues. Composition is skewed to low complexity over residues 801–822 (VPSK…GKAP) and 874–886 (VDSF…ASIS). Polar residues predominate over residues 969-982 (NGGSRDSSIKSPQN). Residues 1344–1419 (GDKGVRMMDR…DGNYFYQISS (76 aa)) enclose the DEP domain. 2 disordered regions span residues 1425–1483 (RPES…KNKA) and 1825–1845 (NDSV…LNLS).

The protein belongs to the IML1 family.

It is found in the vacuole membrane. The polypeptide is Vacuolar membrane-associated protein iml1 (iml1) (Aspergillus clavatus (strain ATCC 1007 / CBS 513.65 / DSM 816 / NCTC 3887 / NRRL 1 / QM 1276 / 107)).